The sequence spans 1434 residues: Inositol hexakisphosphate and diphosphoinositol-pentakisphosphate kinase 1 (1434 aa).

66–67 provides a ligand contact to substrate; the sequence is KK. ATP-binding positions include Arg-147, Lys-200, His-207, Arg-226, 250–253, and 259–261; these read EEFM and DVK. 226–227 serves as a coordination point for substrate; sequence RK. 2 residues coordinate substrate: Lys-261 and Arg-275. ATP-binding positions include Ser-277, Asp-322, and 334-336; that span reads DVN. 339–342 is a binding site for substrate; that stretch reads SFVK. Residues 384–455 form a polyphosphoinositide-binding domain region; sequence PTTSGTMMEL…VLDITRLLLA (72 aa). The disordered stretch occupies residues 916-1017; that stretch reads EGSAPAGCGF…PTEMKQSGLG (102 aa). A phosphoserine mark is found at Ser-941 and Ser-984. Polar residues predominate over residues 1002-1017; it reads FSSSRPPTEMKQSGLG. Phosphoserine occurs at positions 1034, 1070, 1142, and 1149. Disordered stretches follow at residues 1133 to 1193, 1228 to 1251, and 1396 to 1434; these read NHQA…GFSD, ESTQ…DTEV, and TDNP…EDIS. Over residues 1165–1183 the composition is skewed to low complexity; it reads SSGPSSTVSSAGPSSPTTV. Positions 1403-1434 are enriched in acidic residues; it reads LSEETDLQAQEVSEEIDQEPEVVDELSNEDIS.

The protein belongs to the histidine acid phosphatase family. VIP1 subfamily.

The protein resides in the cytoplasm. It localises to the cytosol. The protein localises to the cell membrane. The enzyme catalyses 1D-myo-inositol hexakisphosphate + ATP = 1-diphospho-1D-myo-inositol 2,3,4,5,6-pentakisphosphate + ADP. It carries out the reaction 5-diphospho-1D-myo-inositol 1,2,3,4,6-pentakisphosphate + ATP + H(+) = 1,5-bis(diphospho)-1D-myo-inositol 2,3,4,6-tetrakisphosphate + ADP. Its function is as follows. Bifunctional inositol kinase that acts in concert with the IP6K kinases IP6K1, IP6K2 and IP6K3 to synthesize the diphosphate group-containing inositol pyrophosphates diphosphoinositol pentakisphosphate, PP-InsP5, and bis-diphosphoinositol tetrakisphosphate, (PP)2-InsP4. PP-InsP5 and (PP)2-InsP4, also respectively called InsP7 and InsP8, regulate a variety of cellular processes, including apoptosis, vesicle trafficking, cytoskeletal dynamics, exocytosis, insulin signaling and neutrophil activation. Phosphorylates inositol hexakisphosphate (InsP6) at position 1 to produce PP-InsP5 which is in turn phosphorylated by IP6Ks to produce (PP)2-InsP4. Alternatively, phosphorylates PP-InsP5 at position 1, produced by IP6Ks from InsP6, to produce (PP)2-InsP4. Activated when cells are exposed to hyperosmotic stress. The polypeptide is Inositol hexakisphosphate and diphosphoinositol-pentakisphosphate kinase 1 (Rattus norvegicus (Rat)).